Here is a 365-residue protein sequence, read N- to C-terminus: MREETAEQPAPLRSGLTTGSCATATSLAAARLLLEGSNADAVQIILPKGKQVQMRLEFCRHTADGAEAGTIKDAGDDPDVTHGALLYSRVRLTPEPGIRFIAGQGVGTVTRPGLVLAVGEPAINPIPRRMIGEHLQRLAEERAYPGGFEVTVNVEGGAELALKTMNPRLGILGGLSILGTSGIVRPFSCAAYIASIHQGIDVAKTNGYLHIAACTGNASEDTMRRVYELPEIALIEMGDFVGAVLKHLRKVPVDKLSLCGGFGKISKLAAGHMDLHSRHSSIDLSQLAQWAADAGADPALQQAIRQANTSQQALAMASAAGVALGDAVCRHALDFARSVVPPQVQVEVFAIDRQGGIVGHAGGFQ.

It belongs to the CbiD family.

It catalyses the reaction Co-precorrin-5B + S-adenosyl-L-methionine = Co-precorrin-6A + S-adenosyl-L-homocysteine. It functions in the pathway cofactor biosynthesis; adenosylcobalamin biosynthesis; cob(II)yrinate a,c-diamide from sirohydrochlorin (anaerobic route): step 6/10. Functionally, catalyzes the methylation of C-1 in cobalt-precorrin-5B to form cobalt-precorrin-6A. This chain is Cobalt-precorrin-5B C(1)-methyltransferase, found in Pseudomonas fluorescens (strain ATCC BAA-477 / NRRL B-23932 / Pf-5).